A 274-amino-acid polypeptide reads, in one-letter code: 4-hydroxy-tetrahydrodipicolinate reductase (274 aa).

An NAD(+)-binding site is contributed by 7–12 (GVTGRM). Arginine 40 contacts NADP(+). Residues 103 to 105 (GTT) and 127 to 130 (SANF) contribute to the NAD(+) site. The active-site Proton donor/acceptor is the histidine 160. (S)-2,3,4,5-tetrahydrodipicolinate is bound at residue histidine 161. Lysine 164 serves as the catalytic Proton donor. 170–171 (GT) lines the (S)-2,3,4,5-tetrahydrodipicolinate pocket.

It belongs to the DapB family. As to quaternary structure, homotetramer.

The protein localises to the cytoplasm. The enzyme catalyses (S)-2,3,4,5-tetrahydrodipicolinate + NAD(+) + H2O = (2S,4S)-4-hydroxy-2,3,4,5-tetrahydrodipicolinate + NADH + H(+). It carries out the reaction (S)-2,3,4,5-tetrahydrodipicolinate + NADP(+) + H2O = (2S,4S)-4-hydroxy-2,3,4,5-tetrahydrodipicolinate + NADPH + H(+). It participates in amino-acid biosynthesis; L-lysine biosynthesis via DAP pathway; (S)-tetrahydrodipicolinate from L-aspartate: step 4/4. Functionally, catalyzes the conversion of 4-hydroxy-tetrahydrodipicolinate (HTPA) to tetrahydrodipicolinate. The sequence is that of 4-hydroxy-tetrahydrodipicolinate reductase from Blochmanniella floridana.